The sequence spans 357 residues: UDP-N-acetylglucosamine--N-acetylmuramyl-(pentapeptide) pyrophosphoryl-undecaprenol N-acetylglucosamine transferase (357 aa).

Residues 13–15, asparagine 125, arginine 161, serine 189, isoleucine 243, and glutamine 288 each bind UDP-N-acetyl-alpha-D-glucosamine; that span reads TGG.

Belongs to the glycosyltransferase 28 family. MurG subfamily.

It is found in the cell inner membrane. The catalysed reaction is di-trans,octa-cis-undecaprenyl diphospho-N-acetyl-alpha-D-muramoyl-L-alanyl-D-glutamyl-meso-2,6-diaminopimeloyl-D-alanyl-D-alanine + UDP-N-acetyl-alpha-D-glucosamine = di-trans,octa-cis-undecaprenyl diphospho-[N-acetyl-alpha-D-glucosaminyl-(1-&gt;4)]-N-acetyl-alpha-D-muramoyl-L-alanyl-D-glutamyl-meso-2,6-diaminopimeloyl-D-alanyl-D-alanine + UDP + H(+). The protein operates within cell wall biogenesis; peptidoglycan biosynthesis. Functionally, cell wall formation. Catalyzes the transfer of a GlcNAc subunit on undecaprenyl-pyrophosphoryl-MurNAc-pentapeptide (lipid intermediate I) to form undecaprenyl-pyrophosphoryl-MurNAc-(pentapeptide)GlcNAc (lipid intermediate II). The polypeptide is UDP-N-acetylglucosamine--N-acetylmuramyl-(pentapeptide) pyrophosphoryl-undecaprenol N-acetylglucosamine transferase (Polynucleobacter asymbioticus (strain DSM 18221 / CIP 109841 / QLW-P1DMWA-1) (Polynucleobacter necessarius subsp. asymbioticus)).